Consider the following 72-residue polypeptide: Hydrophobic protein OSR8 (72 aa).

Transmembrane regions (helical) follow at residues 9 to 29 (FLEI…RFGC) and 39 to 59 (LLTI…LVAL).

It belongs to the UPF0057 (PMP3) family.

Its subcellular location is the membrane. The protein is Hydrophobic protein OSR8 (OSR8) of Oryza sativa subsp. japonica (Rice).